Consider the following 440-residue polypeptide: Glycerophosphocholine cholinephosphodiesterase ENPP6 (440 aa).

An N-terminal signal peptide occupies residues 1–22; that stretch reads MAVKLGTLLLALALGLAQPASA. Substrate is bound by residues Asp-32, Ser-71, and Asn-92. Positions 32 and 71 each coordinate Zn(2+). Ser-71 (nucleophile) is an active-site residue. Phosphoserine is present on Ser-71. 2 N-linked (GlcNAc...) asparagine glycosylation sites follow: Asn-100 and Asn-118. A disulfide bridge connects residues Cys-142 and Cys-154. Asp-193 is a binding site for substrate. Residues Asp-193, His-197, Asp-240, and His-241 each coordinate Zn(2+). Residue His-241 coordinates substrate. Asn-341 carries an N-linked (GlcNAc...) asparagine glycan. His-354 provides a ligand contact to substrate. His-354 contributes to the Zn(2+) binding site. Residue Asn-404 is glycosylated (N-linked (GlcNAc...) asparagine). A lipid anchor (GPI-anchor amidated serine) is attached at Ser-419. Positions 420 to 440 are cleaved as a propeptide — removed in mature form; sequence TAPPVWPSHCALALILLFLLA.

The protein belongs to the nucleotide pyrophosphatase/phosphodiesterase family. In terms of assembly, homodimer; disulfide-linked. Homotetramer. Zn(2+) serves as cofactor. Predominantly expressed in kidney and brain. In the kidney, expressed specifically in the proximal tubules and thin descending limbs of Henle (at protein level).

Its subcellular location is the cell membrane. The enzyme catalyses sn-glycerol 3-phosphocholine + H2O = phosphocholine + glycerol + H(+). It carries out the reaction a 1-acyl-sn-glycero-3-phosphocholine + H2O = a 1-acyl-sn-glycerol + phosphocholine + H(+). It catalyses the reaction a 1-O-alkyl-sn-glycero-3-phosphocholine + H2O = a 1-O-alkyl-sn-glycerol + phosphocholine + H(+). The catalysed reaction is 1-dodecanoyl-sn-glycero-3-phosphocholine + H2O = 1-dodecanoyl-sn-glycerol + phosphocholine + H(+). The enzyme catalyses 1-hexadecanoyl-sn-glycero-3-phosphocholine + H2O = 1-hexadecanoyl-sn-glycerol + phosphocholine + H(+). It carries out the reaction 1-(5Z,8Z,11Z,14Z-eicosatetraenoyl)-sn-glycero-3-phosphocholine + H2O = 1-(5Z,8Z,11Z,14Z-eicosatetraenoyl)-sn-glycerol + phosphocholine + H(+). It catalyses the reaction 1-tetradecanoyl-sn-glycero-3-phosphocholine + H2O = 1-tetradecanoyl-sn-glycerol + phosphocholine + H(+). The catalysed reaction is sphing-4-enine-phosphocholine + H2O = sphing-4-enine + phosphocholine + H(+). The enzyme catalyses 1-(9Z-octadecenoyl)-sn-glycero-3-phosphocholine + H2O = 1-(9Z-octadecenoyl)-sn-glycerol + phosphocholine + H(+). It carries out the reaction 1-(9Z,12Z)-octadecadienoyl-sn-glycero-3-phosphocholine + H2O = 1-(9Z,12Z-octadecadienoyl)-sn-glycerol + phosphocholine + H(+). It catalyses the reaction glycero-2-phosphocholine + H2O = phosphocholine + glycerol + H(+). Inhibited by EDTA and EGTA in vitro. Choline-specific glycerophosphodiesterase that hydrolyzes glycerophosphocholine (GPC) and lysophosphatidylcholine (LPC) and contributes to supplying choline to the cells. Has a preference for LPC with short (12:0 and 14:0) or polyunsaturated (18:2 and 20:4) fatty acids. In vitro, hydrolyzes only choline-containing lysophospholipids, such as sphingosylphosphorylcholine (SPC), platelet-activating factor (PAF) and lysoPAF, but not other lysophospholipids. This chain is Glycerophosphocholine cholinephosphodiesterase ENPP6, found in Homo sapiens (Human).